The primary structure comprises 1098 residues: Protein translocase subunit SecA (1098 aa).

Residues glutamine 176, 194-198 (GEGKT), and aspartate 696 contribute to the ATP site. The disordered stretch occupies residues 1024-1098 (EPEQVREAAP…KYKNCHGQNA (75 aa)). Composition is skewed to basic and acidic residues over residues 1041-1051 (QYREEKQDLSD) and 1058-1077 (AEHD…KTVG). Residues cysteine 1082, cysteine 1084, cysteine 1093, and histidine 1094 each coordinate Zn(2+).

This sequence belongs to the SecA family. Monomer and homodimer. Part of the essential Sec protein translocation apparatus which comprises SecA, SecYEG and auxiliary proteins SecDF. Other proteins may also be involved. It depends on Zn(2+) as a cofactor.

The protein localises to the cell inner membrane. It localises to the cytoplasm. The enzyme catalyses ATP + H2O + cellular proteinSide 1 = ADP + phosphate + cellular proteinSide 2.. In terms of biological role, part of the Sec protein translocase complex. Interacts with the SecYEG preprotein conducting channel. Has a central role in coupling the hydrolysis of ATP to the transfer of proteins into and across the cell membrane, serving as an ATP-driven molecular motor driving the stepwise translocation of polypeptide chains across the membrane. This is Protein translocase subunit SecA from Phocaeicola vulgatus (strain ATCC 8482 / DSM 1447 / JCM 5826 / CCUG 4940 / NBRC 14291 / NCTC 11154) (Bacteroides vulgatus).